A 2313-amino-acid polypeptide reads, in one-letter code: Serine/threonine-protein kinase smg-1 (2313 aa).

The segment covering 779–791 (NRKSSDKKPKSTT) has biased composition (basic and acidic residues). Residues 779-798 (NRKSSDKKPKSTTEDVPPPA) form a disordered region. One can recognise an FAT domain in the interval 1045-1528 (ARERLQLVES…VFQVVSGAAS (484 aa)). An HEAT repeat occupies 1478 to 1514 (VHVWKEILPQLFARLSHPSDHIRKTLVDLISRVCTAA). Residues 1746 to 2091 (VADNVTILPT…DTIELFQLRV (346 aa)) enclose the PI3K/PI4K catalytic domain. Residues 1752-1758 (ILPTKTR) are G-loop. The tract at residues 1954–1962 (GLGDRHLDN) is catalytic loop. Residues 1974 to 1998 (HIDYNICFDKGKILRIPETVPFRLS) are activation loop. Residues 2281 to 2313 (RKLSPREEADVLIAEATSSANLAQMYEGWTAWV) form the FATC domain.

It belongs to the PI3/PI4-kinase family. As to quaternary structure, component of a post-splicing multiprotein NMD complex. Requires Mn(2+) as cofactor.

The protein localises to the cytoplasm. The enzyme catalyses L-seryl-[protein] + ATP = O-phospho-L-seryl-[protein] + ADP + H(+). It carries out the reaction L-threonyl-[protein] + ATP = O-phospho-L-threonyl-[protein] + ADP + H(+). In terms of biological role, serine/threonine protein kinase involved in mRNA surveillance. Recognizes the substrate consensus sequence [ST]-Q. Involved in nonsense-mediated decay (NMD) of mRNAs containing premature stop codons by phosphorylating smg-2. The chain is Serine/threonine-protein kinase smg-1 (smg-1) from Caenorhabditis briggsae.